Here is a 67-residue protein sequence, read N- to C-terminus: Phycobilisome 7.8 kDa linker polypeptide, allophycocyanin-associated, core (67 aa).

The region spanning 1 to 56 (MRVFKVTACVPSQTRIRTQRELQNTYFTKLVPYDNWFREQQRIMKMGGKIVKVELA) is the CpcD-like domain.

It belongs to the phycobilisome linker protein family.

It localises to the cellular thylakoid membrane. Rod linker protein, associated with allophycocyanin. Linker polypeptides determine the state of aggregation and the location of the disk-shaped phycobiliprotein units within the phycobilisome and modulate their spectroscopic properties in order to mediate a directed and optimal energy transfer. The polypeptide is Phycobilisome 7.8 kDa linker polypeptide, allophycocyanin-associated, core (apcC) (Arthrospira platensis (Spirulina platensis)).